The sequence spans 375 residues: tRNA-specific 2-thiouridylase MnmA (375 aa).

ATP-binding positions include 7–14 and methionine 33; that span reads GLSGGVDS. The tract at residues 102-104 is interaction with target base in tRNA; sequence NPD. Catalysis depends on cysteine 107, which acts as the Nucleophile. Cysteine 107 and cysteine 205 are disulfide-bonded. Glycine 132 contacts ATP. Positions 155–157 are interaction with tRNA; sequence KDQ. Cysteine 205 (cysteine persulfide intermediate) is an active-site residue. Residues 313–314 are interaction with tRNA; that stretch reads RY.

It belongs to the MnmA/TRMU family.

The protein resides in the cytoplasm. It catalyses the reaction S-sulfanyl-L-cysteinyl-[protein] + uridine(34) in tRNA + AH2 + ATP = 2-thiouridine(34) in tRNA + L-cysteinyl-[protein] + A + AMP + diphosphate + H(+). Its function is as follows. Catalyzes the 2-thiolation of uridine at the wobble position (U34) of tRNA, leading to the formation of s(2)U34. The sequence is that of tRNA-specific 2-thiouridylase MnmA from Phytoplasma australiense.